The following is a 700-amino-acid chain: MGRRVPALRQLLVLAMLVLKQSQLHSPELSGSRCPEPCDCAPDGALRCPGPRAGLARLSLTYLPVKVIPSQAFRGLNEVVKIEISQSDSLERIEANAFDNLLNLSEILIQNTKNLLYIEPGAFTNLPRLKYLSICNTGIRTLPDVSKISSSEFNFILEICDNLYITTIPGNAFQGMNNESITLKLYGNGFEEVQSHAFNGTTLISLELKENIYLEKMHSGTFQGATGPSILDVSSTKLQALPSHGLESIQTLIATSSYSLKTLPSREKFTSLLVATLTYPSHCCAFRNLPKKEQNFSFSIFENFSKQCESTVREANNETLYSAIFEENELSGWDYDYDFCSPKTLQCTPEPDAFNPCEDIMGYAFLRVLIWLINILAIFGNLTVLFVLLTSRYKLTVPRFLMCNLSFADFCMGLYLLLIASVDSQTKGQYYNHAIDWQTGSGCSAAGFFTVFASELSVYTLTVITLERWHTITYAVQLDQKLRLRHAIPIMLGGWIFSTLMATLPLVGVSSYMKVSICLPMDVESTLSQVYILSILLLNAVAFVVICACYVRIYFAVQNPELTAPNKDTKIAKKMAILIFTDFTCMAPISFFAISAAFKVPLITVTNSKVLLVLFYPVNSCANPFLYAVFTKAFQRDFFLLLSRFGCCKHRAELYRRKEFSACTFNSKNGFPRSSKPSQAALKLSIVHCQQPTPPRVLIQ.

An N-terminal signal peptide occupies residues 1-26 (MGRRVPALRQLLVLAMLVLKQSQLHS). Residues 27–362 (PELSGSRCPE…AFNPCEDIMG (336 aa)) are Extracellular-facing. The stretch at 52 to 75 (RAGLARLSLTYLPVKVIPSQAFRG) is one LRR 1 repeat. An N-linked (GlcNAc...) asparagine glycan is attached at asparagine 103. LRR repeat units lie at residues 126-150 (LPRLKYLSICNTGIRTLPDVSKISS), 176-200 (MNNESITLKLYGNGFEEVQSHAFNG), and 225-248 (ATGPSILDVSSTKLQALPSHGLES). N-linked (GlcNAc...) asparagine glycans are attached at residues asparagine 178 and asparagine 199. Residues asparagine 295, asparagine 303, and asparagine 317 are each glycosylated (N-linked (GlcNAc...) asparagine). Tyrosine 335 is modified (sulfotyrosine). The helical transmembrane segment at 363-390 (YAFLRVLIWLINILAIFGNLTVLFVLLT) threads the bilayer. Residues 391 to 399 (SRYKLTVPR) lie on the Cytoplasmic side of the membrane. The chain crosses the membrane as a helical span at residues 400–422 (FLMCNLSFADFCMGLYLLLIASV). Residues 423–443 (DSQTKGQYYNHAIDWQTGSGC) lie on the Extracellular side of the membrane. Cysteines 443 and 518 form a disulfide. The helical transmembrane segment at 444–466 (SAAGFFTVFASELSVYTLTVITL) threads the bilayer. At 467 to 486 (ERWHTITYAVQLDQKLRLRH) the chain is on the cytoplasmic side. The chain crosses the membrane as a helical span at residues 487 to 509 (AIPIMLGGWIFSTLMATLPLVGV). Over 510 to 529 (SSYMKVSICLPMDVESTLSQ) the chain is Extracellular. Residues 530–551 (VYILSILLLNAVAFVVICACYV) traverse the membrane as a helical segment. The Cytoplasmic segment spans residues 552 to 574 (RIYFAVQNPELTAPNKDTKIAKK). A helical transmembrane segment spans residues 575–598 (MAILIFTDFTCMAPISFFAISAAF). The Extracellular segment spans residues 599 to 609 (KVPLITVTNSK). The chain crosses the membrane as a helical span at residues 610–631 (VLLVLFYPVNSCANPFLYAVFT). Residues 632–700 (KAFQRDFFLL…QPTPPRVLIQ (69 aa)) are Cytoplasmic-facing. Residues cysteine 647 and cysteine 648 are each lipidated (S-palmitoyl cysteine).

The protein belongs to the G-protein coupled receptor 1 family. FSH/LSH/TSH subfamily. Sulfated.

Its subcellular location is the cell membrane. Functionally, receptor for lutropin-choriogonadotropic hormone. The activity of this receptor is mediated by G proteins which activate adenylate cyclase. The sequence is that of Lutropin-choriogonadotropic hormone receptor (Lhcgr) from Mus musculus (Mouse).